The following is a 605-amino-acid chain: Probable potassium transport system protein Kup 2 (605 aa).

12 helical membrane-spanning segments follow: residues 17-37, 45-65, 96-116, 139-159, 169-189, 211-231, 246-266, 286-306, 338-358, 367-387, 394-414, and 417-437; these read GLVF…IMTL, VLGI…VEYA, MAFA…DGVI, AQGG…IFQF, FGPI…VSII, GLAG…GEAL, AWYF…AFIL, LYIP…QALI, IYIG…MILF, AYGL…TMIF, WKVP…TANL, and LPHG…IMVI.

Belongs to the HAK/KUP transporter (TC 2.A.72) family.

The protein localises to the cell inner membrane. The enzyme catalyses K(+)(in) + H(+)(in) = K(+)(out) + H(+)(out). Transport of potassium into the cell. Likely operates as a K(+):H(+) symporter. This is Probable potassium transport system protein Kup 2 from Geobacter sulfurreducens (strain ATCC 51573 / DSM 12127 / PCA).